We begin with the raw amino-acid sequence, 495 residues long: Phenylalanine--tRNA ligase alpha subunit (495 aa).

Residues Thr338, 377–379 (QLE), and Tyr417 each bind L-phenylalanine. Residue Glu419 coordinates Mg(2+). An L-phenylalanine-binding site is contributed by Phe442.

The protein belongs to the class-II aminoacyl-tRNA synthetase family. Phe-tRNA synthetase alpha subunit type 2 subfamily. Tetramer of two alpha and two beta subunits. It depends on Mg(2+) as a cofactor.

It is found in the cytoplasm. It catalyses the reaction tRNA(Phe) + L-phenylalanine + ATP = L-phenylalanyl-tRNA(Phe) + AMP + diphosphate + H(+). The chain is Phenylalanine--tRNA ligase alpha subunit from Methanosarcina mazei (strain ATCC BAA-159 / DSM 3647 / Goe1 / Go1 / JCM 11833 / OCM 88) (Methanosarcina frisia).